A 248-amino-acid polypeptide reads, in one-letter code: MAIKVGVLGAQGRVGQAIVAGVTAAYDLELVAEVDRGDSLDVLVQSGAEVIVDFTTPDSVMDNLEFCISHGIHCVVGTTGFTPERLEIVKKWAEEKGNTGVLIAPNFAISAVLTMAFARQAARFFDSAEVVECHHPNKLDAPSGTAIHTAEGIAQARREAGMPTQPDATEQSLDGARGADVGGVKVHAVRMTGMVAHEEVIFGGPGQSLTIRQDSYDRTSFVPGVLVGVRNVAQHLGLTVGLEHYLDI.

NAD(+) is bound by residues 9–14, 77–79, and 104–107; these read GAQGRV, GTT, and APNF. H134 (proton donor/acceptor) is an active-site residue. Residue H135 coordinates (S)-2,3,4,5-tetrahydrodipicolinate. Catalysis depends on K138, which acts as the Proton donor. 144–145 is a (S)-2,3,4,5-tetrahydrodipicolinate binding site; the sequence is GT. The tract at residues 157 to 176 is disordered; that stretch reads RREAGMPTQPDATEQSLDGA.

This sequence belongs to the DapB family.

It localises to the cytoplasm. The enzyme catalyses (S)-2,3,4,5-tetrahydrodipicolinate + NAD(+) + H2O = (2S,4S)-4-hydroxy-2,3,4,5-tetrahydrodipicolinate + NADH + H(+). The catalysed reaction is (S)-2,3,4,5-tetrahydrodipicolinate + NADP(+) + H2O = (2S,4S)-4-hydroxy-2,3,4,5-tetrahydrodipicolinate + NADPH + H(+). The protein operates within amino-acid biosynthesis; L-lysine biosynthesis via DAP pathway; (S)-tetrahydrodipicolinate from L-aspartate: step 4/4. Catalyzes the conversion of 4-hydroxy-tetrahydrodipicolinate (HTPA) to tetrahydrodipicolinate. This chain is 4-hydroxy-tetrahydrodipicolinate reductase, found in Corynebacterium diphtheriae (strain ATCC 700971 / NCTC 13129 / Biotype gravis).